The sequence spans 296 residues: MKLIPIILNAKNLSGMAGSISICCWIVVFVPQIYENFRRQSAEGLSLLFIVLWLLGDIFNVMGAMMQNLLPTMIILAAYYTLADLILLIQCMWYDKEKKSILQEVKKNVDPVHLPPANPINETVLQDVFNEYEPLLPRIEEEDSQSYSSLELGRTIVVKERENFFNDFLIVSGVLIAGILSWYISYCSGLDNGIPKKKPAFEQINLPAQILGYLSAILYLGSRIPQIVLNFKRKSCEGVSFLFFLFACLGNTSFIISVLSASWLIGSAGTLLMDFTVFIQFFLYAKPKYEKILIDN.

At 1 to 12 (MKLIPIILNAKN) the chain is on the vacuolar side. The region spanning 10-76 (AKNLSGMAGS…QNLLPTMIIL (67 aa)) is the PQ-loop 1 domain. Residues 13-33 (LSGMAGSISICCWIVVFVPQI) form a helical membrane-spanning segment. Topologically, residues 34–44 (YENFRRQSAEG) are cytoplasmic. Residues 45–65 (LSLLFIVLWLLGDIFNVMGAM) traverse the membrane as a helical segment. The Vacuolar segment spans residues 66–68 (MQN). A helical transmembrane segment spans residues 69 to 89 (LLPTMIILAAYYTLADLILLI). Topologically, residues 90–163 (QCMWYDKEKK…RTIVVKEREN (74 aa)) are cytoplasmic. Residues 164–184 (FFNDFLIVSGVLIAGILSWYI) traverse the membrane as a helical segment. Residues 185–199 (SYCSGLDNGIPKKKP) lie on the Vacuolar side of the membrane. Residues 200 to 220 (AFEQINLPAQILGYLSAILYL) traverse the membrane as a helical segment. Residues 208 to 270 (AQILGYLSAI…ASWLIGSAGT (63 aa)) enclose the PQ-loop 2 domain. The Cytoplasmic segment spans residues 221–238 (GSRIPQIVLNFKRKSCEG). Residues 239 to 259 (VSFLFFLFACLGNTSFIISVL) form a helical membrane-spanning segment. The Vacuolar segment spans residues 260-262 (SAS). The helical transmembrane segment at 263 to 283 (WLIGSAGTLLMDFTVFIQFFL) threads the bilayer. The Cytoplasmic portion of the chain corresponds to 284 to 296 (YAKPKYEKILIDN).

Belongs to the laat-1 family.

The protein localises to the vacuole membrane. Its subcellular location is the mitochondrion membrane. Its function is as follows. Amino acid transporter that moves histidine into the vacuole. May also contribute to low affinity arginine import into the vacuole. May function as an amino acid/proton antiporter. The chain is Vacuolar histidine transporter YPQ3 from Saccharomyces cerevisiae (strain ATCC 204508 / S288c) (Baker's yeast).